Here is a 535-residue protein sequence, read N- to C-terminus: Probable histone-arginine methyltransferase 1.3 (535 aa).

The residue at position 1 (M1) is an N-acetylmethionine. The 316-residue stretch at E141 to S456 folds into the SAM-dependent MTase PRMT-type domain. Positions 158, 167, 191, 213, and 243 each coordinate S-adenosyl-L-methionine. Active-site residues include E257 and E266. S271 contributes to the S-adenosyl-L-methionine binding site. Residues V494–D517 form a disordered region. A compositionally biased stretch (polar residues) spans S507 to N516.

This sequence belongs to the class I-like SAM-binding methyltransferase superfamily. Protein arginine N-methyltransferase family. As to quaternary structure, interacts with PQT3 in the nucleus. Ubiquitinated by PQT3.

It is found in the nucleus. Its subcellular location is the cytoplasm. It carries out the reaction L-arginyl-[protein] + 2 S-adenosyl-L-methionine = N(omega),N(omega)-dimethyl-L-arginyl-[protein] + 2 S-adenosyl-L-homocysteine + 2 H(+). In terms of biological role, methylates (mono- and asymmetric dimethylation) the guanidino nitrogens of arginyl residues in several proteins involved in DNA packaging, transcription regulation, and mRNA stability. Recruited to promoters upon gene activation, methylates histone H3 and activates transcription via chromatin remodeling. Positive regulator in the oxidative stress tolerance that promotes the expression of enzymes preventing oxidative stress such as APX1 and GPX1 by histone methylation (H3R17me2a). Confers tolerance to cadmium CdCl(2) and salt NaCl stresses. The chain is Probable histone-arginine methyltransferase 1.3 (PRMT13) from Arabidopsis thaliana (Mouse-ear cress).